The sequence spans 235 residues: Large ribosomal subunit protein uL1 (235 aa).

This sequence belongs to the universal ribosomal protein uL1 family. Part of the 50S ribosomal subunit.

Its function is as follows. Binds directly to 23S rRNA. The L1 stalk is quite mobile in the ribosome, and is involved in E site tRNA release. Functionally, protein L1 is also a translational repressor protein, it controls the translation of the L11 operon by binding to its mRNA. The chain is Large ribosomal subunit protein uL1 from Corynebacterium diphtheriae (strain ATCC 700971 / NCTC 13129 / Biotype gravis).